The primary structure comprises 420 residues: Replication factor C large subunit (420 aa).

46-53 contributes to the ATP binding site; sequence GVQGSGKT.

The protein belongs to the activator 1 small subunits family. RfcL subfamily. In terms of assembly, heteromultimer composed of small subunits (RfcS) and large subunits (RfcL).

Part of the RFC clamp loader complex which loads the PCNA sliding clamp onto DNA. The chain is Replication factor C large subunit from Thermoplasma volcanium (strain ATCC 51530 / DSM 4299 / JCM 9571 / NBRC 15438 / GSS1).